A 551-amino-acid chain; its full sequence is Cation/acetate symporter ActP (551 aa).

14 consecutive transmembrane segments (helical) span residues 8–28, 35–55, 78–98, 105–125, 151–171, 185–205, 208–228, 264–284, 305–325, 357–377, 406–426, 430–450, 465–485, and 496–516; these read ALAA…TGAV, WQAI…TYWA, GLAI…SALV, GLIY…LIAE, LSAC…MVGA, VAVV…GMLA, WVQI…AFMV, ISAL…PHIL, GFMG…IMLV, LFLG…VAGL, VSKI…ILFE, IAFM…PIIL, VGGW…PTIW, and FPYE…IWVF.

Belongs to the sodium:solute symporter (SSF) (TC 2.A.21) family.

It is found in the cell inner membrane. Transports acetate. This chain is Cation/acetate symporter ActP, found in Klebsiella pneumoniae (strain 342).